The primary structure comprises 130 residues: Ribosome-binding factor A (130 aa).

The disordered stretch occupies residues 111 to 130 (RDLDDVGPEATSSDEDAEQR).

This sequence belongs to the RbfA family. In terms of assembly, monomer. Binds 30S ribosomal subunits, but not 50S ribosomal subunits or 70S ribosomes.

It is found in the cytoplasm. Functionally, one of several proteins that assist in the late maturation steps of the functional core of the 30S ribosomal subunit. Associates with free 30S ribosomal subunits (but not with 30S subunits that are part of 70S ribosomes or polysomes). Required for efficient processing of 16S rRNA. May interact with the 5'-terminal helix region of 16S rRNA. The protein is Ribosome-binding factor A of Xanthomonas axonopodis pv. citri (strain 306).